Reading from the N-terminus, the 87-residue chain is Small ribosomal subunit protein bS20 (87 aa).

Residues 1-22 (MANIKSQIKRNKTNEKARLRNQ) are disordered.

Belongs to the bacterial ribosomal protein bS20 family.

Binds directly to 16S ribosomal RNA. The sequence is that of Small ribosomal subunit protein bS20 from Corynebacterium glutamicum (strain R).